Here is a 476-residue protein sequence, read N- to C-terminus: Cobyric acid synthase (476 aa).

The GATase cobBQ-type domain occupies alanine 242 to alanine 428. The active-site Nucleophile is cysteine 323. Histidine 420 is an active-site residue.

The protein belongs to the CobB/CobQ family. CobQ subfamily.

It participates in cofactor biosynthesis; adenosylcobalamin biosynthesis. Its function is as follows. Catalyzes amidations at positions B, D, E, and G on adenosylcobyrinic A,C-diamide. NH(2) groups are provided by glutamine, and one molecule of ATP is hydrogenolyzed for each amidation. The protein is Cobyric acid synthase of Janthinobacterium sp. (strain Marseille) (Minibacterium massiliensis).